Reading from the N-terminus, the 223-residue chain is Leucyl/phenylalanyl-tRNA--protein transferase (223 aa).

This sequence belongs to the L/F-transferase family.

Its subcellular location is the cytoplasm. The catalysed reaction is N-terminal L-lysyl-[protein] + L-leucyl-tRNA(Leu) = N-terminal L-leucyl-L-lysyl-[protein] + tRNA(Leu) + H(+). The enzyme catalyses N-terminal L-arginyl-[protein] + L-leucyl-tRNA(Leu) = N-terminal L-leucyl-L-arginyl-[protein] + tRNA(Leu) + H(+). It carries out the reaction L-phenylalanyl-tRNA(Phe) + an N-terminal L-alpha-aminoacyl-[protein] = an N-terminal L-phenylalanyl-L-alpha-aminoacyl-[protein] + tRNA(Phe). Functionally, functions in the N-end rule pathway of protein degradation where it conjugates Leu, Phe and, less efficiently, Met from aminoacyl-tRNAs to the N-termini of proteins containing an N-terminal arginine or lysine. The protein is Leucyl/phenylalanyl-tRNA--protein transferase of Dinoroseobacter shibae (strain DSM 16493 / NCIMB 14021 / DFL 12).